The sequence spans 438 residues: Aspartate--tRNA(Asp/Asn) ligase (438 aa).

Residue Glu176 participates in L-aspartate binding. An aspartate region spans residues Gln198 to Lys201. Arg220 is an L-aspartate binding site. ATP-binding positions include Arg220–Glu222, Arg228–Leu230, and Glu361. Mg(2+) is bound by residues Glu361 and Ser364. The L-aspartate site is built by Ser364 and Arg368. An ATP-binding site is contributed by Gly409 to Arg412.

This sequence belongs to the class-II aminoacyl-tRNA synthetase family. Type 2 subfamily. In terms of assembly, homodimer. It depends on Mg(2+) as a cofactor.

The protein localises to the cytoplasm. The enzyme catalyses tRNA(Asx) + L-aspartate + ATP = L-aspartyl-tRNA(Asx) + AMP + diphosphate. Its function is as follows. Aspartyl-tRNA synthetase with relaxed tRNA specificity since it is able to aspartylate not only its cognate tRNA(Asp) but also tRNA(Asn). Reaction proceeds in two steps: L-aspartate is first activated by ATP to form Asp-AMP and then transferred to the acceptor end of tRNA(Asp/Asn). The chain is Aspartate--tRNA(Asp/Asn) ligase from Methanococcus vannielii (strain ATCC 35089 / DSM 1224 / JCM 13029 / OCM 148 / SB).